Here is a 603-residue protein sequence, read N- to C-terminus: Deuterosome assembly protein 1 (603 aa).

Coiled-coil stretches lie at residues 14–59 (CEAE…NAQT), 85–197 (MTQN…GKKQ), 227–278 (IEKL…ELQS), 336–399 (QDQP…KQLK), and 454–480 (HTSI…NGKS). A Phosphoserine modification is found at Ser-546. Residues 557 to 600 (AAQHFLLEEEKRAKELEKLLNTHIDELQRHTEFTLNKYSKLKQN) adopt a coiled-coil conformation.

Belongs to the CEP63 family. Interacts with CEP152; the interaction is mutually exclusive with CEP63.

It localises to the cytoplasm. Key structural component of the deuterosome, a structure that promotes de novo centriole amplification in multiciliated cells. Deuterosome-mediated centriole amplification occurs in terminally differentiated multiciliated cells and can generate more than 100 centrioles. Probably sufficient for the specification and formation of the deuterosome inner core. Interacts with CEP152 and recruits PLK4 to activate centriole biogenesis. The chain is Deuterosome assembly protein 1 from Macaca fascicularis (Crab-eating macaque).